A 293-amino-acid chain; its full sequence is Probable porphobilinogen deaminase (293 aa).

S-(dipyrrolylmethanemethyl)cysteine is present on Cys-233.

The protein belongs to the HMBS family. It depends on dipyrromethane as a cofactor.

It carries out the reaction 4 porphobilinogen + H2O = hydroxymethylbilane + 4 NH4(+). It participates in porphyrin-containing compound metabolism; protoporphyrin-IX biosynthesis; coproporphyrinogen-III from 5-aminolevulinate: step 2/4. Functionally, tetrapolymerization of the monopyrrole PBG into the hydroxymethylbilane pre-uroporphyrinogen in several discrete steps. This Saccharolobus islandicus (strain Y.N.15.51 / Yellowstone #2) (Sulfolobus islandicus) protein is Probable porphobilinogen deaminase.